A 329-amino-acid polypeptide reads, in one-letter code: Phenylalanine--tRNA ligase alpha subunit (329 aa).

The protein belongs to the class-II aminoacyl-tRNA synthetase family. Phe-tRNA synthetase alpha subunit type 1 subfamily. As to quaternary structure, tetramer of two alpha and two beta subunits. It depends on Mg(2+) as a cofactor.

Its subcellular location is the cytoplasm. The catalysed reaction is tRNA(Phe) + L-phenylalanine + ATP = L-phenylalanyl-tRNA(Phe) + AMP + diphosphate + H(+). The sequence is that of Phenylalanine--tRNA ligase alpha subunit (pheS) from Buchnera aphidicola subsp. Acyrthosiphon pisum (strain APS) (Acyrthosiphon pisum symbiotic bacterium).